The following is a 387-amino-acid chain: Exodeoxyribonuclease 7 large subunit (387 aa).

The protein belongs to the XseA family. In terms of assembly, heterooligomer composed of large and small subunits.

It localises to the cytoplasm. The enzyme catalyses Exonucleolytic cleavage in either 5'- to 3'- or 3'- to 5'-direction to yield nucleoside 5'-phosphates.. Functionally, bidirectionally degrades single-stranded DNA into large acid-insoluble oligonucleotides, which are then degraded further into small acid-soluble oligonucleotides. This chain is Exodeoxyribonuclease 7 large subunit, found in Campylobacter jejuni subsp. jejuni serotype O:6 (strain 81116 / NCTC 11828).